Here is a 255-residue protein sequence, read N- to C-terminus: 3-deoxy-manno-octulosonate cytidylyltransferase (255 aa).

It belongs to the KdsB family.

The protein localises to the cytoplasm. It carries out the reaction 3-deoxy-alpha-D-manno-oct-2-ulosonate + CTP = CMP-3-deoxy-beta-D-manno-octulosonate + diphosphate. It participates in nucleotide-sugar biosynthesis; CMP-3-deoxy-D-manno-octulosonate biosynthesis; CMP-3-deoxy-D-manno-octulosonate from 3-deoxy-D-manno-octulosonate and CTP: step 1/1. It functions in the pathway bacterial outer membrane biogenesis; lipopolysaccharide biosynthesis. Functionally, activates KDO (a required 8-carbon sugar) for incorporation into bacterial lipopolysaccharide in Gram-negative bacteria. This is 3-deoxy-manno-octulosonate cytidylyltransferase from Pelobacter propionicus (strain DSM 2379 / NBRC 103807 / OttBd1).